Reading from the N-terminus, the 358-residue chain is Protein ocs (358 aa).

Belongs to the lysopine/nopaline/octopine/opine/vitopine dehydrogenases family.

It catalyses the reaction D-octopine + NAD(+) + H2O = L-arginine + pyruvate + NADH + H(+). It carries out the reaction D-lysopine + NADP(+) + H2O = L-lysine + pyruvate + NADPH + H(+). Reductive condensation of pyruvate and arginine, lysine, histidine, or octopine to form octopine, lysopine, histopine, or octopinic acid, respectively. NADPH is the preferred cofactor, but NADH can also be used. The protein is Protein ocs (ocs) of Agrobacterium vitis (Rhizobium vitis).